We begin with the raw amino-acid sequence, 127 residues long: Small ribosomal subunit protein eS8 (127 aa).

Positions 1-33 are disordered; it reads MAIWQGKSMKKPSGGRAKMNRGKRKYELGREPA.

The protein belongs to the eukaryotic ribosomal protein eS8 family. Part of the 30S ribosomal subunit.

The polypeptide is Small ribosomal subunit protein eS8 (rps8e) (Methanothermobacter thermautotrophicus (strain ATCC 29096 / DSM 1053 / JCM 10044 / NBRC 100330 / Delta H) (Methanobacterium thermoautotrophicum)).